The following is a 327-amino-acid chain: Cytochrome c biogenesis protein CcsA (327 aa).

The next 8 helical transmembrane spans lie at isoleucine 13–leucine 33, glycine 46–glycine 66, leucine 73–phenylalanine 93, leucine 101–leucine 121, methionine 145–isoleucine 165, isoleucine 233–asparagine 253, tryptophan 262–isoleucine 282, and alanine 294–leucine 314.

The protein belongs to the CcmF/CycK/Ccl1/NrfE/CcsA family. May interact with Ccs1.

Its subcellular location is the plastid. The protein localises to the chloroplast thylakoid membrane. Functionally, required during biogenesis of c-type cytochromes (cytochrome c6 and cytochrome f) at the step of heme attachment. This is Cytochrome c biogenesis protein CcsA from Lobularia maritima (Sweet alyssum).